Here is a 540-residue protein sequence, read N- to C-terminus: GMP synthase [glutamine-hydrolyzing] (540 aa).

The Glutamine amidotransferase type-1 domain occupies lysine 24 to aspartate 217. Cysteine 101 functions as the Nucleophile in the catalytic mechanism. Catalysis depends on residues histidine 191 and glutamate 193. Positions tryptophan 218 to arginine 415 constitute a GMPS ATP-PPase domain. An ATP-binding site is contributed by serine 245 to serine 251.

As to quaternary structure, homodimer.

It catalyses the reaction XMP + L-glutamine + ATP + H2O = GMP + L-glutamate + AMP + diphosphate + 2 H(+). It functions in the pathway purine metabolism; GMP biosynthesis; GMP from XMP (L-Gln route): step 1/1. In terms of biological role, catalyzes the synthesis of GMP from XMP. This is GMP synthase [glutamine-hydrolyzing] from Nitrobacter hamburgensis (strain DSM 10229 / NCIMB 13809 / X14).